We begin with the raw amino-acid sequence, 169 residues long: Protein GrpE (169 aa).

Residues 1–25 form a disordered region; the sequence is MSEEKQNGQIQEETVENSENQNNEL. Polar residues predominate over residues 7 to 23; that stretch reads NGQIQEETVENSENQNN.

Belongs to the GrpE family. As to quaternary structure, homodimer.

Its subcellular location is the cytoplasm. Functionally, participates actively in the response to hyperosmotic and heat shock by preventing the aggregation of stress-denatured proteins, in association with DnaK and GrpE. It is the nucleotide exchange factor for DnaK and may function as a thermosensor. Unfolded proteins bind initially to DnaJ; upon interaction with the DnaJ-bound protein, DnaK hydrolyzes its bound ATP, resulting in the formation of a stable complex. GrpE releases ADP from DnaK; ATP binding to DnaK triggers the release of the substrate protein, thus completing the reaction cycle. Several rounds of ATP-dependent interactions between DnaJ, DnaK and GrpE are required for fully efficient folding. The protein is Protein GrpE of Campylobacter lari (strain RM2100 / D67 / ATCC BAA-1060).